The sequence spans 640 residues: tRNA-dihydrouridine(47) synthase [NAD(P)(+)]-like (640 aa).

Over residues 1-11 (MAESEGSNTEN) the composition is skewed to polar residues. Disordered regions lie at residues 1-23 (MAES…ENLD) and 43-123 (FIDA…HSQF). The span at 43–57 (FIDADGKDVTEKETC) shows a compositional bias: basic and acidic residues. The span at 58–72 (SELSLNDAENTTRTE) shows a compositional bias: polar residues. Residues 77-86 (PEAKRIKLDD) show a composition bias toward basic and acidic residues. The segment covering 104-120 (EKKRARGQNKSRPHMKH) has biased composition (basic residues). 2 consecutive C3H1-type zinc fingers follow at residues 123-153 (FEEN…HDVA) and 161-191 (EDIR…HLGE). FMN contacts are provided by residues 301 to 303 (PLT) and Gln355. Residue Cys386 is the Proton donor of the active site. Residues Lys425, His455, 487–489 (NGD), and 510–511 (AR) each bind FMN.

This sequence belongs to the Dus family. Dus3 subfamily. Requires FMN as cofactor.

It carries out the reaction 5,6-dihydrouridine(47) in tRNA + NAD(+) = uridine(47) in tRNA + NADH + H(+). The enzyme catalyses 5,6-dihydrouridine(47) in tRNA + NADP(+) = uridine(47) in tRNA + NADPH + H(+). The catalysed reaction is a 5,6-dihydrouridine in mRNA + NAD(+) = a uridine in mRNA + NADH + H(+). It catalyses the reaction a 5,6-dihydrouridine in mRNA + NADP(+) = a uridine in mRNA + NADPH + H(+). Functionally, catalyzes the synthesis of dihydrouridine, a modified base, in various RNAs, such as tRNAs, mRNAs and some long non-coding RNAs (lncRNAs). Mainly modifies the uridine in position 47 (U47) in the D-loop of most cytoplasmic tRNAs. Also able to mediate the formation of dihydrouridine in some mRNAs, thereby regulating their translation. The sequence is that of tRNA-dihydrouridine(47) synthase [NAD(P)(+)]-like (dus3l) from Xenopus laevis (African clawed frog).